The chain runs to 414 residues: Serine/arginine-rich splicing factor SR45 (414 aa).

Disordered stretches follow at residues 1–95 (MAKP…KAVQ) and 175–414 (LPPR…PRKT). Composition is skewed to low complexity over residues 10 to 34 (SPSV…SRSI) and 42 to 60 (RSLS…GSRS). The Nuclear localization signal 1 signature appears at 62 to 69 (PRRGKSPA). A Phosphoserine modification is found at S77. An RRM domain is found at 98 to 176 (LVLHVDSLSR…KVVKATFTLP (79 aa)). The span at 176-191 (PPRQKVSSPPKPVSAA) shows a compositional bias: low complexity. The span at 205–220 (DAEKDGGPRRPRETSP) shows a compositional bias: basic and acidic residues. The segment at 218 to 219 (TS) is required for isoform 1 function in petal development. A compositionally biased stretch (basic residues) spans 228 to 243 (PRRRSPLPRRGLSPRR). The Nuclear localization signal 2 motif lies at 229–236 (RRRSPLPR). S256 is modified (phosphoserine). Short sequence motifs (nuclear localization signal) lie at residues 284–291 (PRRYRSPP), 318–325 (PRRLRSPP), and 338–345 (IRRPGRSR). Basic residues-rich tracts occupy residues 285 to 343 (RRYR…RPGR) and 352 to 363 (RKGRGPAGRRGR). Positions 364–373 (SSSYSSSPSP) are enriched in low complexity. Positions 373–380 (PRRIPRKI) match the Nuclear localization signal 6 motif. The segment covering 375-394 (RIPRKISRSRSPKRPLRGKR) has biased composition (basic residues). Residues 404-414 (SPPPPPPPRKT) are compositionally biased toward pro residues.

The protein belongs to the splicing factor SR family. SR45 subfamily. In terms of assembly, component of the spliceosome. Interacts with AFC2, U2AF35A, U2AF35B, RNU1, SCL33 and SKIP. The interaction with AFC2 depends on phosphorylation status. Interaction with RNU1 defines initial 5' splice sites and interaction with U2AF35B 3' splice sites in the early stage of spliceosome assembly. In terms of processing, phosphorylated by AFC2. The phosphorylation status regulates intranuclear distribution. Especially present in actively growing regions and dividing cells. Mostly expressed in roots (primary and secondary root meristem), shoot apical meristem (SAM), leaf primordia, pollen and inflorescence, and, to a lower extent, in leaves, vascular tissue, hydathode and fruits.

It is found in the nucleus speckle. It localises to the nucleus. Its subcellular location is the nucleoplasm. Functionally, involved in 5' and 3' splicing site selection of introns, and may bridge the 5' and 3' components of the spliceosome. Isoform 1 is required during flower petal development and isoform 2 is involved in root growth. Negatively regulates glucose and abscisic acid (ABA) signaling during early seedling development. Involved in the RNA-directed DNA methylation pathway. Modulates KIN10 stability in response to sugars, probably through the splicing regulation of 5PTASE13, a protein implicated in the proteasomal degradation of KIN10. The protein is Serine/arginine-rich splicing factor SR45 of Arabidopsis thaliana (Mouse-ear cress).